A 627-amino-acid chain; its full sequence is 1-deoxy-D-xylulose-5-phosphate synthase (627 aa).

Residues H87 and 128–130 (GHS) contribute to the thiamine diphosphate site. Position 159 (D159) interacts with Mg(2+). Thiamine diphosphate-binding positions include 160-161 (GA), N188, F295, and E375. Mg(2+) is bound at residue N188.

The protein belongs to the transketolase family. DXPS subfamily. As to quaternary structure, homodimer. Mg(2+) is required as a cofactor. Thiamine diphosphate serves as cofactor.

It catalyses the reaction D-glyceraldehyde 3-phosphate + pyruvate + H(+) = 1-deoxy-D-xylulose 5-phosphate + CO2. It functions in the pathway metabolic intermediate biosynthesis; 1-deoxy-D-xylulose 5-phosphate biosynthesis; 1-deoxy-D-xylulose 5-phosphate from D-glyceraldehyde 3-phosphate and pyruvate: step 1/1. Functionally, catalyzes the acyloin condensation reaction between C atoms 2 and 3 of pyruvate and glyceraldehyde 3-phosphate to yield 1-deoxy-D-xylulose-5-phosphate (DXP). The protein is 1-deoxy-D-xylulose-5-phosphate synthase of Pseudomonas paraeruginosa (strain DSM 24068 / PA7) (Pseudomonas aeruginosa (strain PA7)).